Reading from the N-terminus, the 396-residue chain is Succinyl-CoA:mesaconate CoA-transferase (396 aa).

Residue D175 is the Nucleophile of the active site.

This sequence belongs to the CoA-transferase III family.

The catalysed reaction is mesaconate + succinyl-CoA = 2-methylfumaryl-CoA + succinate. Its function is as follows. Involved in the methylaspartate cycle. Catalyzes the transfer of the CoA moiety from succinyl-CoA to mesaconate to generate mesaconyl-CoA (2-methylfumaryl-CoA) and succinate. The chain is Succinyl-CoA:mesaconate CoA-transferase from Haloarcula marismortui (strain ATCC 43049 / DSM 3752 / JCM 8966 / VKM B-1809) (Halobacterium marismortui).